A 255-amino-acid polypeptide reads, in one-letter code: MFDFWVGPFYVGFFGVTTCLFASLGIALILLGTALGPTWNPLRINIAPPDLSYGLGFAPLMKGGLWQLITICAIGRFCCWALRQVEIARKLGMGLHIPFAFSFAIFAYLALVVIRPLLLGAWGHGXPYGILSHLDWVSNIGYQFLHFHYNPAHMIGITFFFTNCMAFGMHGSIILSVLNPGKGEKVKGSEHENTFFRDVVGYSIGTLGIHRLGVFLAISAAFWSAVCIILSGPFWTRGWPEWWNWWLQFPYSFVG.

3 consecutive transmembrane segments (helical) span residues 12–35 (GFFG…GTAL), 64–92 (GLWQ…RKLG), and 95–120 (LHIP…LLLG). Residues His133 and His153 each contribute to the (7R,8Z)-bacteriochlorophyll b site. The helical transmembrane segment at 150-179 (NPAHMIGITFFFTNCMAFGMHGSIILSVLN) threads the bilayer. Position 170 (His170) interacts with Fe cation. Phe196 serves as a coordination point for a ubiquinone. Residues 205–231 (GTLGIHRLGVFLAISAAFWSAVCIILS) form a helical membrane-spanning segment. Residue His210 participates in Fe cation binding.

This sequence belongs to the reaction center PufL/M/PsbA/D family. Reaction center is composed of four bacteriochlorophylls, two bacteriopheophytins, two ubiquinones, one iron, and three highly hydrophobic polypeptide chains (designated L, M, and H).

It is found in the cellular chromatophore membrane. The reaction center is a membrane-bound complex that mediates the initial photochemical event in the electron transfer process of photosynthesis. The polypeptide is Reaction center protein L chain (pufL) (Pararhodospirillum photometricum (Rhodospirillum photometricum)).